We begin with the raw amino-acid sequence, 149 residues long: Arginine repressor (149 aa).

The protein belongs to the ArgR family.

Its subcellular location is the cytoplasm. Its pathway is amino-acid biosynthesis; L-arginine biosynthesis [regulation]. In terms of biological role, regulates arginine biosynthesis genes. This is Arginine repressor from Bacillus pumilus (strain SAFR-032).